The sequence spans 478 residues: Proline--tRNA ligase (478 aa).

It belongs to the class-II aminoacyl-tRNA synthetase family. ProS type 3 subfamily. Homodimer.

Its subcellular location is the cytoplasm. The enzyme catalyses tRNA(Pro) + L-proline + ATP = L-prolyl-tRNA(Pro) + AMP + diphosphate. Catalyzes the attachment of proline to tRNA(Pro) in a two-step reaction: proline is first activated by ATP to form Pro-AMP and then transferred to the acceptor end of tRNA(Pro). This is Proline--tRNA ligase from Clostridium botulinum (strain Okra / Type B1).